The following is a 306-amino-acid chain: Porphobilinogen deaminase (306 aa).

At Cys239 the chain carries S-(dipyrrolylmethanemethyl)cysteine.

The protein belongs to the HMBS family. Monomer. Requires dipyrromethane as cofactor.

The enzyme catalyses 4 porphobilinogen + H2O = hydroxymethylbilane + 4 NH4(+). It participates in porphyrin-containing compound metabolism; protoporphyrin-IX biosynthesis; coproporphyrinogen-III from 5-aminolevulinate: step 2/4. In terms of biological role, tetrapolymerization of the monopyrrole PBG into the hydroxymethylbilane pre-uroporphyrinogen in several discrete steps. This is Porphobilinogen deaminase from Helicobacter pylori (strain G27).